The chain runs to 212 residues: Probable dual specificity protein phosphatase DDB_G0269404 (212 aa).

The Tyrosine-protein phosphatase domain maps to 30 to 169 (FDAQEVIPNL…LINYEATILK (140 aa)). Catalysis depends on C113, which acts as the Phosphocysteine intermediate.

This sequence belongs to the protein-tyrosine phosphatase family. Non-receptor class dual specificity subfamily.

It catalyses the reaction O-phospho-L-tyrosyl-[protein] + H2O = L-tyrosyl-[protein] + phosphate. It carries out the reaction O-phospho-L-seryl-[protein] + H2O = L-seryl-[protein] + phosphate. The enzyme catalyses O-phospho-L-threonyl-[protein] + H2O = L-threonyl-[protein] + phosphate. Functionally, has a dual specificity toward Ser/Thr and Tyr-containing proteins. The protein is Probable dual specificity protein phosphatase DDB_G0269404 of Dictyostelium discoideum (Social amoeba).